The primary structure comprises 660 residues: MSSEVKSRWSGSGSQKSGTARKPTMLEMAENAASRHYEPVPLPLQRSNSPDSSTDKNPESRAADSRAEVIINPDIPPKAIALPLSRYRGRNPFFSKVNIQGRTYNFLERPTGWKCFIYHFTVFLIVLVCLIFSVMSTIEQYHYFANRALVWMEIVLVVFFGTEYIVRLWSAGCRSKYVGFWGRLRFARKPISIIDLIVVVASVIVLCVGSNGQVFATSAIRGIRFLQILRMLHVDRQGGTWRLLGSVVFIHRQELITTLYIGFLGLIFSSYFVYLAEKDAVDDSGSQQFGSYADALWWGVVTVTTIGYGDKVPQTWIGRTIASCFSVFAISFFALPAGILGSGFALKVQQKQRQKHFNRQIPAAASLIQTSWRCHAAENHESATWKMYVRQPTKFYVASPSPKTKKSVGKRKKLKTDKDNGLNSEKSLNVPNITYDHVVDKDDRKFENSNIDGYDSSVKKSLGILDVNSGALSRANSYADDLDFIEGEPVLAPITHVSQLRESHRVTVKVIRRMQYFVAKKKFQQARKPYDVRDVIEQYSQGHLNLMVRIKELQRRLDQSLGKPTMFLSVSEKSQDRGKNTIGARLNRVEEKFVHMDQKLNTITDMLHHLVAHQQGHPHPQTQPQAQGTVVQAVASTHSSLPSYEQLTVRRKDQDNQPDL.

Polar residues predominate over residues 1–18; it reads MSSEVKSRWSGSGSQKSG. Residues 1-67 are disordered; sequence MSSEVKSRWS…PESRAADSRA (67 aa). Residues 1 to 113 lie on the Cytoplasmic side of the membrane; the sequence is MSSEVKSRWS…YNFLERPTGW (113 aa). A compositionally biased stretch (basic and acidic residues) spans 53 to 67; that stretch reads STDKNPESRAADSRA. The helical transmembrane segment at 114 to 135 threads the bilayer; it reads KCFIYHFTVFLIVLVCLIFSVM. Residues 136 to 146 lie on the Extracellular side of the membrane; it reads STIEQYHYFAN. A helical transmembrane segment spans residues 147 to 169; the sequence is RALVWMEIVLVVFFGTEYIVRLW. The Cytoplasmic segment spans residues 170–185; sequence SAGCRSKYVGFWGRLR. Residues 186–211 form a helical membrane-spanning segment; it reads FARKPISIIDLIVVVASVIVLCVGSN. At 212 to 219 the chain is on the extracellular side; sequence GQVFATSA. A helical; Voltage-sensor transmembrane segment spans residues 220-235; the sequence is IRGIRFLQILRMLHVD. Residues 236 to 253 are Cytoplasmic-facing; the sequence is RQGGTWRLLGSVVFIHRQ. Q237 provides a ligand contact to a 1,2-diacyl-sn-glycero-3-phospho-(1D-myo-inositol-4,5-bisphosphate). The helical transmembrane segment at 254-276 threads the bilayer; it reads ELITTLYIGFLGLIFSSYFVYLA. Residues 277 to 292 are Extracellular-facing; it reads EKDAVDDSGSQQFGSY. Positions 293–313 form an intramembrane region, pore-forming; sequence ADALWWGVVTVTTIGYGDKVP. At 314–315 the chain is on the extracellular side; sequence QT. A helical membrane pass occupies residues 316 to 341; the sequence is WIGRTIASCFSVFAISFFALPAGILG. Topologically, residues 342-660 are cytoplasmic; it reads SGFALKVQQK…RKDQDNQPDL (319 aa). Residues 399-426 are disordered; the sequence is SPSPKTKKSVGKRKKLKTDKDNGLNSEK. Over residues 403-415 the composition is skewed to basic residues; that stretch reads KTKKSVGKRKKLK. Positions 579 to 615 form a coiled coil; the sequence is KNTIGARLNRVEEKFVHMDQKLNTITDMLHHLVAHQQ.

It belongs to the potassium channel family. KQT (TC 1.A.1.15) subfamily. Kv7.1/KCNQ1 sub-subfamily. Tetramer. Heterotetramer with KCNE1; targets to the membrane raft. Interacts (via C-terminus) with CALM; forms a heterotetramer in a calcium-independent manner. Interacts with KCNE2; form a heterooligomer complex that targets to the membrane raft and leading to currents with an apparently instantaneous activation, a rapid deactivation process and a linear current-voltage relationship and decreases the amplitude of the outward current. Interacts with KCNE3; four KCNE3 molecules are bound to one KCNQ1 tetramer (4:4 KCNQ1:KCNE3 stoichiometry); alters membrane raft localization; affects KCNQ1 structure and gating properties. Interacts with KCNE4; impairs KCNQ1 localization in lipid rafts and inhibits voltage-gated potassium channel activity. Interacts with KCNE5; impairs KCNQ1 localization in lipid rafts and only conducts current upon strong and continued depolarization. Expressed only in rectal gland and heart. Faintly expressed in intestine. Undetectable in kidney, brain, testis, liver and gills.

It is found in the cell membrane. It localises to the cytoplasmic vesicle membrane. The protein localises to the membrane raft. The protein resides in the endoplasmic reticulum. Its subcellular location is the basolateral cell membrane. It carries out the reaction K(+)(in) = K(+)(out). Its activity is regulated as follows. PIP2 molecule is essential to activate KCNQ channels by inducing the coupling of the voltage-sensing domain (VSD) and the pore-forming domain (PD). Upon channel activation, PIP2 disrupts the VSD-calmodulin/CALM interactions, causing the release of CALM from the VSD which triggers the opening of the gate. Calcium potentiates KCNQ1 channel current through calcium-bound CALM. Calcium-bound CALM competes with PIP2 to stabilize the channel open state. Its function is as follows. Pore-forming subunit of the voltage-gated potassium (Kv) channel involved in the regulation of cardiomyocyte excitability and important in normal development and functions of myocardium, inner ear, stomach and colon. Associates with KCNE beta subunits that modulates current kinetics. Induces a voltage-dependent by rapidly activating and slowly deactivating potassium-selective outward current. Also promotes a delayed voltage activated potassium current showing outward rectification characteristic. During beta-adrenergic receptor stimulation participates in cardiac repolarization by associating with KCNE1 to form the I(Ks) cardiac potassium current that increases the amplitude and slows down the activation kinetics of outward potassium current I(Ks). When associated with KCNE3, forms the potassium channel that is important for cyclic AMP-stimulated intestinal secretion of chloride ions. When associated with KCNE2, forms a heterooligomer complex leading to currents with an apparently instantaneous activation, a rapid deactivation process and a linear current-voltage relationship and decreases the amplitude of the outward current. When associated with KCNE4, inhibits voltage-gated potassium channel activity. When associated with KCNE5, this complex only conducts current upon strong and continued depolarization. This chain is Potassium voltage-gated channel subfamily KQT member 1, found in Squalus acanthias (Spiny dogfish).